Reading from the N-terminus, the 65-residue chain is Hainantoxin-X (65 aa).

The N-terminal stretch at 1–20 (MNMKILVLVAVLCLVVSTHA) is a signal peptide. The propeptide occupies 21-37 (ERHSKTDMEDSPMIQER). Disulfide bonds link C39/C56, C46/C59, and C55/C64.

It belongs to the neurotoxin 36 family. 02 subfamily. As to expression, expressed by the venom gland.

The protein localises to the secreted. Functionally, reversibly blocks N-type calcium channels (Cav2.2/CACNA1B) in rat dorsal root ganglion cells. Elicits no toxic symptoms in either vertebrates or invertebrates during a period of 48 hours post-injection, when it was assayed in vivo by direct injection into mice and cockroaches. The sequence is that of Hainantoxin-X from Cyriopagopus hainanus (Chinese bird spider).